Reading from the N-terminus, the 524-residue chain is Mitochondrial-processing peptidase subunit alpha (524 aa).

The transit peptide at M1–F32 directs the protein to the mitochondrion. Position 63 is an N6-succinyllysine (K63).

The protein belongs to the peptidase M16 family. Heterodimer of PMPCA (alpha) and PMPCB (beta) subunits, forming the mitochondrial processing protease (MPP) in which PMPCA is involved in substrate recognition and binding and PMPCB is the catalytic subunit.

The protein localises to the mitochondrion matrix. Its subcellular location is the mitochondrion inner membrane. In terms of biological role, substrate recognition and binding subunit of the essential mitochondrial processing protease (MPP), which cleaves the mitochondrial sequence off newly imported precursors proteins. This Rattus norvegicus (Rat) protein is Mitochondrial-processing peptidase subunit alpha (Pmpca).